A 500-amino-acid polypeptide reads, in one-letter code: Trehalose-6-phosphate synthase (500 aa).

Arginine 28 serves as a coordination point for D-glucose 6-phosphate. Residue 48-49 (GG) participates in UDP-alpha-D-glucose binding. Positions 104 and 158 each coordinate D-glucose 6-phosphate. Arginine 300 and lysine 305 together coordinate UDP-alpha-D-glucose. A D-glucose 6-phosphate-binding site is contributed by arginine 338. 403–407 (LVAKE) contacts UDP-alpha-D-glucose.

Belongs to the glycosyltransferase 20 family. Homotetramer.

It carries out the reaction ADP-alpha-D-glucose + D-glucose 6-phosphate = alpha,alpha-trehalose 6-phosphate + ADP + H(+). The catalysed reaction is CDP-alpha-D-glucose + D-glucose 6-phosphate = alpha,alpha-trehalose 6-phosphate + CDP + H(+). The enzyme catalyses GDP-alpha-D-glucose + D-glucose 6-phosphate = alpha,alpha-trehalose 6-phosphate + GDP + H(+). It catalyses the reaction TDP-alpha-D-glucose + D-glucose 6-phosphate = 5-methyl-UDP + alpha,alpha-trehalose 6-phosphate + H(+). It carries out the reaction D-glucose 6-phosphate + UDP-alpha-D-glucose = alpha,alpha-trehalose 6-phosphate + UDP + H(+). It functions in the pathway glycan biosynthesis; trehalose biosynthesis. Its function is as follows. Probably involved in the osmoprotection via the biosynthesis of trehalose and in the production of glycogen and alpha-glucan via the TreS-Pep2 branch involved in the biosynthesis of maltose-1-phosphate (M1P). Catalyzes the transfer of glucose from UDP-glucose (UDP-Glc) to D-glucose 6-phosphate (Glc-6-P) to form trehalose-6-phosphate. Probably also able to use ADP-Glc, CDP-Glc, GDP-Glc and TDP-Glc as glucosyl donors. The polypeptide is Trehalose-6-phosphate synthase (Mycobacterium marinum (strain ATCC BAA-535 / M)).